The sequence spans 252 residues: Chitooligosaccharide deacetylase (252 aa).

Mg(2+) contacts are provided by histidine 61 and histidine 125.

This sequence belongs to the YdjC deacetylase family. ChbG subfamily. As to quaternary structure, homodimer. Requires Mg(2+) as cofactor.

Its subcellular location is the cytoplasm. The catalysed reaction is N,N'-diacetylchitobiose + H2O = N-acetyl-beta-D-glucosaminyl-(1-&gt;4)-D-glucosamine + acetate. It catalyses the reaction diacetylchitobiose-6'-phosphate + H2O = N'-monoacetylchitobiose-6'-phosphate + acetate. It participates in glycan degradation; chitin degradation. In terms of biological role, involved in the degradation of chitin. ChbG is essential for growth on the acetylated chitooligosaccharides chitobiose and chitotriose but is dispensable for growth on cellobiose and chitosan dimer, the deacetylated form of chitobiose. Deacetylation of chitobiose-6-P and chitotriose-6-P is necessary for both the activation of the chb promoter by the regulatory protein ChbR and the hydrolysis of phosphorylated beta-glucosides by the phospho-beta-glucosidase ChbF. Catalyzes the removal of only one acetyl group from chitobiose-6-P to yield monoacetylchitobiose-6-P, the inducer of ChbR and the substrate of ChbF. This Escherichia coli O139:H28 (strain E24377A / ETEC) protein is Chitooligosaccharide deacetylase.